A 406-amino-acid chain; its full sequence is Exo-alpha-sialidase (406 aa).

The signal sequence occupies residues 1 to 20 (MQSMRFMILALLVQFLPAWA). Residues Arg59, Arg78, Asp84, and Gln148 each coordinate substrate. An N-linked (GlcNAc...) asparagine glycan is attached at Asn235. Residues Arg265, Arg322, 322–323 (RR), 331–332 (YD), Lys337, Tyr358, Asp376, and 376–378 (DFF) each bind substrate. Asn396 carries N-linked (GlcNAc...) asparagine glycosylation.

The protein belongs to the glycosyl hydrolase 33 family.

It carries out the reaction Hydrolysis of alpha-(2-&gt;3)-, alpha-(2-&gt;6)-, alpha-(2-&gt;8)- glycosidic linkages of terminal sialic acid residues in oligosaccharides, glycoproteins, glycolipids, colominic acid and synthetic substrates.. Functionally, sialidase is able to release sialic acid from a wide variety of natural substrates including bovine salivary mucin, colominic acid, bovine fetuin, a serum glycoprotein containing both alpha-2-6 and alpha-2-3-linkages in a ratio of about 3:2, and glycoproteins and glycolipids from thermally denatured human lung epithelial cells. Does not show any trans-sialidase activity since it is able to remove terminal sialic acid residues but is unable to catalyze their transfer to the acceptor substrate. 2-keto-3-deoxynononic acid (KDN) is the preferred substrate and A.fumigatus can utilize KDN as a sole carbon source. The protein is Exo-alpha-sialidase of Aspergillus fumigatus (strain ATCC MYA-4609 / CBS 101355 / FGSC A1100 / Af293) (Neosartorya fumigata).